The chain runs to 222 residues: Thiamine-phosphate synthase (222 aa).

Residues 44–48 and Asn-75 contribute to the 4-amino-2-methyl-5-(diphosphooxymethyl)pyrimidine site; that span reads QVRMK. Mg(2+) contacts are provided by Asp-76 and Asp-95. Thr-114 is a 4-amino-2-methyl-5-(diphosphooxymethyl)pyrimidine binding site. 140–142 contacts 2-[(2R,5Z)-2-carboxy-4-methylthiazol-5(2H)-ylidene]ethyl phosphate; sequence SRS. Lys-143 is a binding site for 4-amino-2-methyl-5-(diphosphooxymethyl)pyrimidine. Residue Gly-171 coordinates 2-[(2R,5Z)-2-carboxy-4-methylthiazol-5(2H)-ylidene]ethyl phosphate.

The protein belongs to the thiamine-phosphate synthase family. Requires Mg(2+) as cofactor.

The catalysed reaction is 2-[(2R,5Z)-2-carboxy-4-methylthiazol-5(2H)-ylidene]ethyl phosphate + 4-amino-2-methyl-5-(diphosphooxymethyl)pyrimidine + 2 H(+) = thiamine phosphate + CO2 + diphosphate. The enzyme catalyses 2-(2-carboxy-4-methylthiazol-5-yl)ethyl phosphate + 4-amino-2-methyl-5-(diphosphooxymethyl)pyrimidine + 2 H(+) = thiamine phosphate + CO2 + diphosphate. It carries out the reaction 4-methyl-5-(2-phosphooxyethyl)-thiazole + 4-amino-2-methyl-5-(diphosphooxymethyl)pyrimidine + H(+) = thiamine phosphate + diphosphate. It participates in cofactor biosynthesis; thiamine diphosphate biosynthesis; thiamine phosphate from 4-amino-2-methyl-5-diphosphomethylpyrimidine and 4-methyl-5-(2-phosphoethyl)-thiazole: step 1/1. Condenses 4-methyl-5-(beta-hydroxyethyl)thiazole monophosphate (THZ-P) and 2-methyl-4-amino-5-hydroxymethyl pyrimidine pyrophosphate (HMP-PP) to form thiamine monophosphate (TMP). In Anaeromyxobacter dehalogenans (strain 2CP-C), this protein is Thiamine-phosphate synthase.